A 720-amino-acid chain; its full sequence is Biotin biosynthesis bifunctional protein BioWF (720 aa).

Residues 1–39 are disordered; the sequence is MRFSIKMRASARVSSSPSTSDGSSGDHTESRDRADRHIS. Positions 8–23 are enriched in low complexity; sequence RASARVSSSPSTSDGS. Positions 24–39 are enriched in basic and acidic residues; that stretch reads SGDHTESRDRADRHIS. Residue Arg-314 coordinates substrate. Pyridoxal 5'-phosphate is bound at residue 401–402; that stretch reads GY. His-439 provides a ligand contact to substrate. Residues Ser-488, 513-516, and 564-567 each bind pyridoxal 5'-phosphate; these read DDAH and TASK. The residue at position 567 (Lys-567) is an N6-(pyridoxal phosphate)lysine. Thr-684 provides a ligand contact to substrate.

It in the N-terminal section; belongs to the BioW family. The protein in the C-terminal section; belongs to the class-II pyridoxal-phosphate-dependent aminotransferase family. BioF subfamily. As to quaternary structure, homodimer. Mg(2+) serves as cofactor. It depends on pyridoxal 5'-phosphate as a cofactor.

It carries out the reaction heptanedioate + ATP + CoA = 6-carboxyhexanoyl-CoA + AMP + diphosphate. The catalysed reaction is 6-carboxyhexanoyl-[ACP] + L-alanine + H(+) = (8S)-8-amino-7-oxononanoate + holo-[ACP] + CO2. The protein operates within metabolic intermediate metabolism; pimeloyl-CoA biosynthesis; pimeloyl-CoA from pimelate: step 1/1. It participates in cofactor biosynthesis; biotin biosynthesis. Its function is as follows. Catalyzes both the decarboxylative condensation of pimeloyl-[acyl-carrier protein] and L-alanine to produce 8-amino-7-oxononanoate (AON), [acyl-carrier protein], and carbon dioxide, and the transformation of pimelate into pimeloyl-CoA with concomitant hydrolysis of ATP to AMP. In Corynebacterium kroppenstedtii (strain DSM 44385 / JCM 11950 / CIP 105744 / CCUG 35717), this protein is Biotin biosynthesis bifunctional protein BioWF (bioWF).